A 143-amino-acid polypeptide reads, in one-letter code: Putative complexin-1 (143 aa).

A disordered region spans residues 15–71 (NEVTGGLGLKDDGGEKTETGEDPEVVAARLEQEERRKEKHRKMEQEREKMRQGIRDK). 2 stretches are compositionally biased toward basic and acidic residues: residues 23–33 (LKDDGGEKTET) and 44–71 (LEQE…IRDK). Residues 40 to 71 (VAARLEQEERRKEKHRKMEQEREKMRQGIRDK) adopt a coiled-coil conformation.

The protein belongs to the complexin/synaphin family.

The protein resides in the cytoplasm. The protein localises to the cytosol. Positively regulates a late step in synaptic vesicle exocytosis. This chain is Putative complexin-1 (cpx-1), found in Caenorhabditis briggsae.